The chain runs to 438 residues: tRNA(Ile)-lysidine synthase (438 aa).

Residue 19–24 (SGGIDS) participates in ATP binding.

Belongs to the tRNA(Ile)-lysidine synthase family.

The protein localises to the cytoplasm. It catalyses the reaction cytidine(34) in tRNA(Ile2) + L-lysine + ATP = lysidine(34) in tRNA(Ile2) + AMP + diphosphate + H(+). Functionally, ligates lysine onto the cytidine present at position 34 of the AUA codon-specific tRNA(Ile) that contains the anticodon CAU, in an ATP-dependent manner. Cytidine is converted to lysidine, thus changing the amino acid specificity of the tRNA from methionine to isoleucine. This chain is tRNA(Ile)-lysidine synthase, found in Buchnera aphidicola subsp. Baizongia pistaciae (strain Bp).